An 860-amino-acid chain; its full sequence is Photoactivated adenylate cyclase subunit beta (860 aa).

A BLUF 1 domain is found at 56–149; the sequence is LRRLMYLSKS…GRMYGDWHMK (94 aa). The 129-residue stretch at 205 to 333 folds into the Guanylate cyclase 1 domain; it reads VVTFIYLVEF…DCINTTSRIA (129 aa). Residues 420–443 are disordered; that stretch reads RPPIFDDTPKGKPRPRTPGYGGRQ. The BLUF 2 domain occupies 471–563; the sequence is LTTLTYISQA…RAYPAEWTLT (93 aa). A Guanylate cyclase 2 domain is found at 619–748; the sequence is VMLATDICSF…AVSARVMEVE (130 aa). The disordered stretch occupies residues 819 to 860; the sequence is KPLALEPEEAKQDYRVSPGRMRHGDSGRRSNSAQGKRSTQVR. The segment covering 847–860 has biased composition (polar residues); sequence RSNSAQGKRSTQVR.

Belongs to the adenylyl cyclase class-4/guanylyl cyclase family. Heterotetramer of two alpha and two beta subunits. The cofactor is FAD.

Its subcellular location is the cell projection. The protein localises to the cilium. It is found in the flagellum. It carries out the reaction ATP = 3',5'-cyclic AMP + diphosphate. Acts as a photoreceptor for the step-up photophobic response. The sequence is that of Photoactivated adenylate cyclase subunit beta from Euglena longa (Euglenophycean alga).